A 191-amino-acid polypeptide reads, in one-letter code: Guanylate kinase (191 aa).

The region spanning 6-184 (GLIIILSSPS…TIQQIHTIIL (179 aa)) is the Guanylate kinase-like domain. Residue 13–20 (SPSGAGKS) participates in ATP binding.

It belongs to the guanylate kinase family.

The protein resides in the cytoplasm. It catalyses the reaction GMP + ATP = GDP + ADP. Essential for recycling GMP and indirectly, cGMP. In Rickettsia bellii (strain RML369-C), this protein is Guanylate kinase.